We begin with the raw amino-acid sequence, 311 residues long: GTP cyclohydrolase MptA (311 aa).

The protein belongs to the GTP cyclohydrolase IV family. Homodimer. Fe(2+) serves as cofactor.

The catalysed reaction is GTP + H2O = 7,8-dihydroneopterin 2',3'-cyclic phosphate + formate + diphosphate + H(+). It participates in cofactor biosynthesis; 5,6,7,8-tetrahydromethanopterin biosynthesis. Converts GTP to 7,8-dihydro-D-neopterin 2',3'-cyclic phosphate, the first intermediate in the biosynthesis of coenzyme methanopterin. The sequence is that of GTP cyclohydrolase MptA from Methanocorpusculum labreanum (strain ATCC 43576 / DSM 4855 / Z).